The chain runs to 245 residues: Pre-hexon-linking protein VIII (245 aa).

Positions L116–G167 are excised as a propeptide.

Belongs to the adenoviridae hexon-linking protein family. Interacts with the peripentonal hexons as well as the hexons in the facets. Part of a complex composed of the core-capsid bridging protein, the endosome lysis protein VI and the hexon-linking protein VIII; these interactions bridge the virus core to the capsid. In terms of processing, cleaved by the viral protease during virion maturation. May cause the middle segment to be shed from the capsid.

Its subcellular location is the virion. It is found in the host nucleus. Structural component of the virion that acts as a cement protein on the capsid interior and which glue the peripentonal hexons and group-of-nine hexons together. The sequence is that of Pre-hexon-linking protein VIII from Galliformes (FAdV-1).